The primary structure comprises 100 residues: Cystatin-B (100 aa).

The 83-residue stretch at 6 to 88 (GGISAPLDAD…GGGLELSGMQ (83 aa)) folds into the Cystatin domain. The Secondary area of contact signature appears at 48–52 (QIVSG).

The protein belongs to the cystatin family. Widely expressed. Highly expressed in liver and to a lesser extent in spleen, gill, brain, intestine, kidney, head kidney and blood. Lowest level in muscle.

It localises to the cytoplasm. Thiol protease inhibitor. Has papain inhibitory activity in vitro. May be involved in immune responses against invading Gram-negative bacteria. This Oplegnathus fasciatus (Barred knifejaw) protein is Cystatin-B.